We begin with the raw amino-acid sequence, 177 residues long: Bifunctional protein PyrR (177 aa).

Substrate is bound by residues 42–43 (SR), 104–112 (DDVLYTGRT), and Arg137. The PRPP-binding motif lies at 100-112 (VVIVDDVLYTGRT).

This sequence belongs to the purine/pyrimidine phosphoribosyltransferase family. PyrR subfamily.

It carries out the reaction UMP + diphosphate = 5-phospho-alpha-D-ribose 1-diphosphate + uracil. In terms of biological role, regulates the transcription of the pyrimidine nucleotide (pyr) operon in response to exogenous pyrimidines. Its function is as follows. Also displays a weak uracil phosphoribosyltransferase activity which is not physiologically significant. This Fusobacterium nucleatum subsp. nucleatum (strain ATCC 25586 / DSM 15643 / BCRC 10681 / CIP 101130 / JCM 8532 / KCTC 2640 / LMG 13131 / VPI 4355) protein is Bifunctional protein PyrR.